A 236-amino-acid polypeptide reads, in one-letter code: Three prime repair exonuclease 2 (236 aa).

D14 and E16 together coordinate Mg(2+). Substrate is bound by residues E16 to A17 and Y122. The active-site Proton donor/acceptor is the H188. Mg(2+) is bound at residue D193. Residue D193 participates in substrate binding.

Belongs to the exonuclease superfamily. TREX family. Homodimer. Mg(2+) serves as cofactor. As to expression, detected in heart, breast, prostate, skeletal muscle, testis, uterus, bone marrow, colon, small intestine, stomach and thymus.

Its subcellular location is the nucleus. The catalysed reaction is Exonucleolytic cleavage in the 3'- to 5'-direction to yield nucleoside 5'-phosphates.. In terms of biological role, exonuclease with a preference for double-stranded DNA with mismatched 3' termini. May play a role in DNA repair. The polypeptide is Three prime repair exonuclease 2 (TREX2) (Homo sapiens (Human)).